Consider the following 140-residue polypeptide: ATP synthase epsilon chain (140 aa).

The protein belongs to the ATPase epsilon chain family. In terms of assembly, F-type ATPases have 2 components, CF(1) - the catalytic core - and CF(0) - the membrane proton channel. CF(1) has five subunits: alpha(3), beta(3), gamma(1), delta(1), epsilon(1). CF(0) has three main subunits: a, b and c.

It localises to the cell inner membrane. Its function is as follows. Produces ATP from ADP in the presence of a proton gradient across the membrane. The protein is ATP synthase epsilon chain of Neisseria meningitidis serogroup A / serotype 4A (strain DSM 15465 / Z2491).